Consider the following 271-residue polypeptide: MATH domain and coiled-coil domain-containing protein At3g27040 (271 aa).

Residues 7 to 133 (DKKFTWVIKN…NGEVKIVAEV (127 aa)) enclose the MATH domain. Residues 230 to 271 (KLDWLEKKLKETGKSRLQEIEEDLKDLKVKCADMDALLDFLR) adopt a coiled-coil conformation.

The sequence is that of MATH domain and coiled-coil domain-containing protein At3g27040 from Arabidopsis thaliana (Mouse-ear cress).